A 207-amino-acid polypeptide reads, in one-letter code: Large ribosomal subunit protein uL4 (207 aa).

Residues 50–76 (AVKNRSAVSGGGRKPWKQKGTGRARQG) form a disordered region.

It belongs to the universal ribosomal protein uL4 family. In terms of assembly, part of the 50S ribosomal subunit.

One of the primary rRNA binding proteins, this protein initially binds near the 5'-end of the 23S rRNA. It is important during the early stages of 50S assembly. It makes multiple contacts with different domains of the 23S rRNA in the assembled 50S subunit and ribosome. Its function is as follows. Forms part of the polypeptide exit tunnel. In Macrococcus caseolyticus (strain JCSC5402) (Macrococcoides caseolyticum), this protein is Large ribosomal subunit protein uL4.